The following is a 712-amino-acid chain: Serrate RNA effector molecule homolog (712 aa).

Disordered regions lie at residues 1–80 (MVDS…DSIY), 214–256 (ADIK…TEKS), and 620–712 (QRPV…DDIP). Basic and acidic residues-rich tracts occupy residues 8–26 (GDRRRDKFARERRDEDYRR) and 34–54 (YDNKRPGGRRDDYQVKRSRGD). Residues 65–79 (RSGNGSDLPTESDSI) show a composition bias toward polar residues. A compositionally biased stretch (basic and acidic residues) spans 214–236 (ADIKKDENGNGTEQPKEEPEVKQ). The span at 240-251 (ATEELEEGAIED) shows a compositional bias: acidic residues. 2 stretches are compositionally biased toward basic and acidic residues: residues 621–637 (RPVDCEPKQAPRDDHRG) and 645–655 (GYGRERDDDRG). The segment covering 656-668 (PGGGGRNSFGGGG) has biased composition (gly residues).

Belongs to the ARS2 family.

It localises to the nucleus. Functionally, acts as a mediator between the cap-binding complex (CBC) and the primary microRNAs (miRNAs) processing machinery. Contributes to the stability and delivery of capped primary miRNA transcripts to the primary miRNA processing complex, thereby playing a role in RNA-mediated gene silencing (RNAi) by miRNAs. The protein is Serrate RNA effector molecule homolog of Caenorhabditis elegans.